The following is a 211-amino-acid chain: Uracil phosphoribosyltransferase (211 aa).

Residues Arg77, Arg102, and 129–137 (DPMLATGGS) contribute to the 5-phospho-alpha-D-ribose 1-diphosphate site. Uracil-binding positions include Ile192 and 197–199 (GDA). A 5-phospho-alpha-D-ribose 1-diphosphate-binding site is contributed by Asp198.

Belongs to the UPRTase family. Mg(2+) serves as cofactor.

The catalysed reaction is UMP + diphosphate = 5-phospho-alpha-D-ribose 1-diphosphate + uracil. It participates in pyrimidine metabolism; UMP biosynthesis via salvage pathway; UMP from uracil: step 1/1. Allosterically activated by GTP. In terms of biological role, catalyzes the conversion of uracil and 5-phospho-alpha-D-ribose 1-diphosphate (PRPP) to UMP and diphosphate. The polypeptide is Uracil phosphoribosyltransferase (Corynebacterium aurimucosum (strain ATCC 700975 / DSM 44827 / CIP 107346 / CN-1) (Corynebacterium nigricans)).